A 94-amino-acid chain; its full sequence is Integration host factor subunit beta (94 aa).

Belongs to the bacterial histone-like protein family. Heterodimer of an alpha and a beta chain.

Functionally, this protein is one of the two subunits of integration host factor, a specific DNA-binding protein that functions in genetic recombination as well as in transcriptional and translational control. This is Integration host factor subunit beta from Chelativorans sp. (strain BNC1).